A 1082-amino-acid polypeptide reads, in one-letter code: MSWDDAIDGVDRDTPGGRMPRGWTVAARLRAANDDITHAAVADTLPAYAELHCLSDFSFLRGASSAEQLFARAHHCGYSALAITDECSLAGIVRGLEASRATGVRLIVGSEFTLIDCTRFVLLVENAHGYPQLCSVITTGRRAAGKGAYRLGRAEVEAHFRDVVPGVFALWLPGDQPQAEQGAWLQRVFAERAFLAVELHREQDDAARLQALQALAQQLGMSALASGDVHMAQRRDRIVQDTLTAIRHTLPLADCGAHLFRNGERHLRPRRALGNIYPHALLQASVELAQRCTFDLSKVQYTYPRELVPQGHTPASYLRQLTEAGMRERWPEGAPANVVAQIDSELELIAYKGYEAFFLTVQDVVRFARAQHILCQGRGSSANSAVCYALGITAVNPSETRLLMARFLSKERDEPPDIDVDFEHERREEVLQYVYTKYGRERAALAATVICYRGKSAVRDVAKAFGLPPDQIALLANCYGWGNGDTPMEQRIAEAGFDLANPLINKILAVTEHLRDHPRHLSQHVGGFVISDEPLSMLVPVENAAMADRTIIQWDKDDLETMQLLKVDCLALGMLTCIRKTLDLVRGHRGRDYTIATLPGEDAATYKMIQRADTVGVFQIESRAQMAMLPRLKPREFYDLVIEVAIVRPGPIQGDMVHPYLRRRQGYEPVSFPSPGVEEILGRTLGIPLFQEQVMELVIHAGYTDSEADQLRRSMAAWRRGGDMEPHRVRIRELMAGRGYAPEFIDQIFEQIKGFGSYGFPQSHAASFAKLVYASCWLKRHEPAAFACGLLNAQPMGFYSASQIVQDARRGSPERQRVEVLPVDVLHSDWDNILVGGRPWHSDADPGEQPAIRLGLRQVSGLSEKVVERIVAARAQRPFADIGDLCLRAALDEKARLALAEAGALQSMVGNRNAARWAMAGVEARRPLLPGSPAERAVELPAPRAGEEILADYRAVGLSLRQHPMALLRPQMLQRRILGLRELQARRHGSGVHVAGLVTQRQRPATAKGTIFVTLEDEHGMINVIVWSHLAMRRRRALLESRLLAVRGRWERVDGVEHLIAGDLYDLSDLLGEMQLPSRDFH.

Belongs to the DNA polymerase type-C family. DnaE2 subfamily.

Its subcellular location is the cytoplasm. The catalysed reaction is DNA(n) + a 2'-deoxyribonucleoside 5'-triphosphate = DNA(n+1) + diphosphate. DNA polymerase involved in damage-induced mutagenesis and translesion synthesis (TLS). It is not the major replicative DNA polymerase. The polypeptide is Error-prone DNA polymerase (Xanthomonas campestris pv. campestris (strain B100)).